Consider the following 354-residue polypeptide: 4-hydroxy-3-methylbut-2-en-1-yl diphosphate synthase (flavodoxin) (354 aa).

[4Fe-4S] cluster is bound by residues C265, C268, C300, and E307.

The protein belongs to the IspG family. [4Fe-4S] cluster is required as a cofactor.

The enzyme catalyses (2E)-4-hydroxy-3-methylbut-2-enyl diphosphate + oxidized [flavodoxin] + H2O + 2 H(+) = 2-C-methyl-D-erythritol 2,4-cyclic diphosphate + reduced [flavodoxin]. It participates in isoprenoid biosynthesis; isopentenyl diphosphate biosynthesis via DXP pathway; isopentenyl diphosphate from 1-deoxy-D-xylulose 5-phosphate: step 5/6. Converts 2C-methyl-D-erythritol 2,4-cyclodiphosphate (ME-2,4cPP) into 1-hydroxy-2-methyl-2-(E)-butenyl 4-diphosphate. This chain is 4-hydroxy-3-methylbut-2-en-1-yl diphosphate synthase (flavodoxin), found in Hydrogenobaculum sp. (strain Y04AAS1).